The sequence spans 90 residues: Probable Fe(2+)-trafficking protein (90 aa).

The protein belongs to the Fe(2+)-trafficking protein family.

Its function is as follows. Could be a mediator in iron transactions between iron acquisition and iron-requiring processes, such as synthesis and/or repair of Fe-S clusters in biosynthetic enzymes. This Pseudomonas fluorescens (strain Pf0-1) protein is Probable Fe(2+)-trafficking protein.